We begin with the raw amino-acid sequence, 327 residues long: Phenylalanine--tRNA ligase alpha subunit (327 aa).

Residue Glu-252 coordinates Mg(2+).

This sequence belongs to the class-II aminoacyl-tRNA synthetase family. Phe-tRNA synthetase alpha subunit type 1 subfamily. Tetramer of two alpha and two beta subunits. Mg(2+) serves as cofactor.

It localises to the cytoplasm. The catalysed reaction is tRNA(Phe) + L-phenylalanine + ATP = L-phenylalanyl-tRNA(Phe) + AMP + diphosphate + H(+). The sequence is that of Phenylalanine--tRNA ligase alpha subunit from Erwinia tasmaniensis (strain DSM 17950 / CFBP 7177 / CIP 109463 / NCPPB 4357 / Et1/99).